Reading from the N-terminus, the 362-residue chain is MAQIFNFSSGPAMLPAEVLKQAQQELRDWNGLGTSVMEVSHRGKEFIQVAEEAEKDFRDLLNVPSNYKVLFCHGGGRGQFAAVPLNILGDKTTADYVDAGYWAASAIKEAKKYCTPNVFDAKVTVDGLRAVKPMREWQLSDNAAYMHYCPNETIDGIAIDETPDFGKDVVVAADFSSTILSRPIDVSRYGVIYAGAQKNIGPAGLTIVIVREDLLGKANIACPSILDYSILNDNGSMFNTPPTFAWYLSGLVFKWLKANGGVAEMDKINQQKAELLYGVIDNSDFYRNDVAKANRSRMNVPFQLADSALDKLFLEESFAAGLHALKGHRVVGGMRASIYNAMPLEGVKALTDFMVEFERRHG.

L-glutamate-binding residues include Ser9 and Arg42. Pyridoxal 5'-phosphate is bound by residues 76–77, Trp102, Thr153, Asp174, and Gln197; that span reads GR. Lys198 is modified (N6-(pyridoxal phosphate)lysine). 239 to 240 provides a ligand contact to pyridoxal 5'-phosphate; that stretch reads NT.

It belongs to the class-V pyridoxal-phosphate-dependent aminotransferase family. SerC subfamily. Homodimer. Pyridoxal 5'-phosphate serves as cofactor.

It is found in the cytoplasm. The enzyme catalyses O-phospho-L-serine + 2-oxoglutarate = 3-phosphooxypyruvate + L-glutamate. The catalysed reaction is 4-(phosphooxy)-L-threonine + 2-oxoglutarate = (R)-3-hydroxy-2-oxo-4-phosphooxybutanoate + L-glutamate. It functions in the pathway amino-acid biosynthesis; L-serine biosynthesis; L-serine from 3-phospho-D-glycerate: step 2/3. Its pathway is cofactor biosynthesis; pyridoxine 5'-phosphate biosynthesis; pyridoxine 5'-phosphate from D-erythrose 4-phosphate: step 3/5. Functionally, catalyzes the reversible conversion of 3-phosphohydroxypyruvate to phosphoserine and of 3-hydroxy-2-oxo-4-phosphonooxybutanoate to phosphohydroxythreonine. The polypeptide is Phosphoserine aminotransferase (Escherichia coli (strain ATCC 8739 / DSM 1576 / NBRC 3972 / NCIMB 8545 / WDCM 00012 / Crooks)).